The primary structure comprises 1150 residues: Pesticidal crystal protein Cry9Ea (1150 aa).

Belongs to the delta endotoxin family.

Functionally, promotes colloidosmotic lysis by binding to the midgut epithelial cells of insects. This is Pesticidal crystal protein Cry9Ea (cry9Ea) from Bacillus thuringiensis subsp. aizawai.